A 291-amino-acid polypeptide reads, in one-letter code: MRKLMTATAALCACAVTVSAGAAWADADVQPAGSVPIPDGPAQTWIVADLDSGQVLAGRDQNVAHPPASTIKVLLALVALDELDLNSTVVADVADTQAECNCVGVKPGRSYTARQLLDGLLLVSGNDAANTLAHMLGGQDVTVAKMNAKAATLGATSTHATTPSGLDGPGGSGASTAHDLVVIFRAAMANPVFAQITAEPSAMFPSDNGEQLIVNQDELLQRYPGAIGGKTGYTNAARKTFVGAAARGGRRLVIAMMYGLVKEGGPTYWDQAATLFDWGFALNPQASVGSL.

The N-terminal stretch at 1 to 22 (MRKLMTATAALCACAVTVSAGA) is a signal peptide. The active-site Acyl-ester intermediate is Ser-69. The active-site Proton acceptor is the Lys-72. Ser-124 is an active-site residue.

This sequence belongs to the peptidase S11 family.

It is found in the periplasm. Its pathway is cell wall biogenesis; peptidoglycan biosynthesis. Inhibited by the beta-lactam antibiotic meropenem. Inhibited by the non-specific inhibitor phenylmethylsulfonyl fluoride (PMSF). In terms of biological role, probably cleaves the terminal D-Ala-D-Ala dipeptide of the peptidoglycan stem peptide. Shows significant D,D-carboxypeptidase activity in vitro. Acts on the synthetic penta-peptide substrate Penta-DAP (L-Ala-gamma-D-Gln-DAP-D-Ala-D-Ala). Also shows weak activity on Penta-Lys (L-Ala-gamma-Glu-L-Lys-D-Ala-D-Ala). The catalytic domain binds weakly to peptidoglycan in vitro. Plays an important role in the maintenance of colony morphology and cell wall permeability and integrity. This chain is D-alanyl-D-alanine carboxypeptidase DacB2, found in Mycobacterium tuberculosis (strain ATCC 25618 / H37Rv).